The sequence spans 139 residues: uncharacterized protein (139 aa).

The 110-residue stretch at 5-114 folds into the HIT domain; sequence IFCKIINKEL…IPRFKNDGFG (110 aa). The Histidine triad motif signature appears at 99-103; sequence HTHFH.

This is an uncharacterized protein from Borreliella burgdorferi (strain ATCC 35210 / DSM 4680 / CIP 102532 / B31) (Borrelia burgdorferi).